We begin with the raw amino-acid sequence, 1637 residues long: Kinesin-like protein KIF21B (1637 aa).

The Kinesin motor domain maps to 8–370 (CVKVAVRIRP…LKYANRARNI (363 aa)). Position 87–94 (87–94 (GQTGAGKT)) interacts with ATP. Coiled-coil stretches lie at residues 376 to 604 (VNQD…EEEG) and 631 to 824 (NFQA…ALRR). Positions 400–1099 (MEYKAGKRVI…LQALIYNVQQ (700 aa)) are interaction with TRIM3. Low complexity predominate over residues 509-533 (ASARSPYSLGASPAAPAFGGSPASS). Disordered stretches follow at residues 509–538 (ASAR…EDAS) and 552–628 (KKKE…PEEK). Positions 578-627 (NSEETDENEAEEEEEERDESGCEEEEGREDEDEDSGSEESLVDSDSDPEE) are enriched in acidic residues. S579 carries the post-translational modification Phosphoserine. T582 is modified (phosphothreonine). 2 disordered regions span residues 830–865 (SERV…GARS) and 880–906 (FLGD…GASQ). Positions 846–865 (SGAEVSASTTSSEAESGARS) are enriched in low complexity. Residues 928–1016 (MQRMTIVNLE…EETKEELDST (89 aa)) adopt a coiled-coil conformation. Phosphoserine is present on residues S1149, S1167, and S1215. Over residues 1194–1217 (RTVSLPTRGSTFPRQSRATETSPL) the composition is skewed to polar residues. The segment at 1194–1251 (RTVSLPTRGSTFPRQSRATETSPLTRRKSYDRGQPIRSTDVGFTPPSSPPTRPRNDRN) is disordered. T1237 bears the Phosphothreonine mark. The residue at position 1241 (S1241) is a Phosphoserine. WD repeat units follow at residues 1306–1343 (GHTK…EIAA), 1346–1384 (GHPN…KCIR), 1410–1448 (QGEH…PVGK), 1451–1493 (GHIG…TGTI), 1502–1539 (PHYD…LIQQ), 1543–1582 (AHKD…PIGE), and 1585–1622 (GHDS…TPCL).

It belongs to the TRAFAC class myosin-kinesin ATPase superfamily. Kinesin family. In terms of assembly, interacts with TRIM3; the interaction positively affects motility of KIF21B. Interacts with GABARAP and GABA(A) receptor subunits: GABRG2, GABRA1 and GABRA2. May interact with GABA(A) receptor subunits: GABRB2 and GABRB3.

The protein resides in the cytoplasm. It is found in the cytoskeleton. The protein localises to the cell projection. It localises to the dendrite. Its subcellular location is the growth cone. The protein resides in the axon. It is found in the cytoplasmic vesicle. Plus-end directed microtubule-dependent motor protein which displays processive activity. Is involved in regulation of microtubule dynamics, synapse function and neuronal morphology, including dendritic tree branching and spine formation. Plays a role in lerning and memory. Involved in delivery of gamma-aminobutyric acid (GABA(A)) receptor to cell surface. In Homo sapiens (Human), this protein is Kinesin-like protein KIF21B (KIF21B).